A 202-amino-acid chain; its full sequence is Dephospho-CoA kinase (202 aa).

Residues 4–201 form the DPCK domain; that stretch reads VVALTGGIAS…QKYLAMSRQN (198 aa). Residue 12-17 coordinates ATP; it reads ASGKTT.

It belongs to the CoaE family.

It localises to the cytoplasm. It carries out the reaction 3'-dephospho-CoA + ATP = ADP + CoA + H(+). Its pathway is cofactor biosynthesis; coenzyme A biosynthesis; CoA from (R)-pantothenate: step 5/5. Functionally, catalyzes the phosphorylation of the 3'-hydroxyl group of dephosphocoenzyme A to form coenzyme A. The protein is Dephospho-CoA kinase of Vibrio cholerae serotype O1 (strain ATCC 39315 / El Tor Inaba N16961).